A 294-amino-acid chain; its full sequence is Thymidylate synthase 1/2 (294 aa).

Residues Arg29 and 154–155 each bind dUMP; that span reads RR. Residue Cys174 is the Nucleophile of the active site. Residues 194–197, Asn205, and 235–237 each bind dUMP; these read RSGD and HVY. A (6R)-5,10-methylene-5,6,7,8-tetrahydrofolate-binding site is contributed by Asp197.

This sequence belongs to the thymidylate synthase family.

It carries out the reaction dUMP + (6R)-5,10-methylene-5,6,7,8-tetrahydrofolate = 7,8-dihydrofolate + dTMP. It participates in pyrimidine metabolism; dTTP biosynthesis. This Encephalitozoon cuniculi (strain GB-M1) (Microsporidian parasite) protein is Thymidylate synthase 1/2 (TS-1).